Here is a 367-residue protein sequence, read N- to C-terminus: MASSGGELGSLFDHHVQRAVCDTRAKYREGRRPRAVKVYTINLESQYLLIQGVPAVGVMKELVERFALYGTIEQYNALDEYPAEDFTEVYLIKFMNLQSARAAKRKMDEQSFFGGLLHVCYAPEFETVEETRKKLQVRKAYVVKTTENKDHYVTKKKLVTEHKDTEDFRQDFHSEMSGFCKAALNTSAGNSNPYLPYSCELPLCYFSSKCMCSSRGPVDRASDSSKDGRNHHKTMGHYNHNGSLQKTQINSFKNSVACPGAQKAVTSSEAVDRFMPRTTQLQERKRRREDDRKLGTFLQTNPSGNEVMIGPLLPDISKVDMHDDSLNTTANLIRHKLKEVISSVPKPPEDKPEDVNTSHPLKQRRRI.

The RRM domain maps to Q46–E124. Residues P217–G228 are compositionally biased toward basic and acidic residues. 3 disordered regions span residues P217 to S243, R277 to S303, and E339 to I367. Residues P347 to N356 show a composition bias toward basic and acidic residues.

This sequence belongs to the RBM48 family. In terms of assembly, component of the minor spliceosome. Within this complex, interacts with ARMC7 and PRPF8/PRP8.

As a component of the minor spliceosome, involved in the splicing of U12-type introns in pre-mRNAs. This is RNA-binding protein 48 (RBM48) from Pongo abelii (Sumatran orangutan).